The chain runs to 592 residues: Inactive heparanase-2 (592 aa).

The first 41 residues, 1 to 41 (MRVLCAFPEAMPSSNSRPPACLAPGALYLALLLHLSLSSQA), serve as a signal peptide directing secretion. Asn-254 and Asn-392 each carry an N-linked (GlcNAc...) asparagine glycan.

The protein belongs to the glycosyl hydrolase 79 family. As to quaternary structure, interacts with HPSE. Interacts with SDC1 (via glycan chains). As to expression, widely expressed, with the highest expression in brain, mammary gland, prostate, small intestine, testis and uterus. In the central nervous system, expressed in the spinal cord, caudate nucleus, thalamus, substantia nigra, medulla oblongata, putamen and pons. In the urinary bladder, expressed in longitudinal and circular layers of detrusor muscle. Found both in normal and cancer tissues.

It localises to the secreted. It is found in the extracellular space. The protein resides in the extracellular matrix. In terms of biological role, binds heparin and heparan sulfate with high affinity, but lacks heparanase activity. Inhibits HPSE, possibly by competing for its substrates (in vitro). This chain is Inactive heparanase-2 (HPSE2), found in Homo sapiens (Human).